The primary structure comprises 132 residues: Protein NrdI (132 aa).

Belongs to the NrdI family.

Probably involved in ribonucleotide reductase function. This chain is Protein NrdI, found in Bartonella quintana (strain Toulouse) (Rochalimaea quintana).